Here is a 225-residue protein sequence, read N- to C-terminus: Membrane protein (225 aa).

Residues 1–20 are Virion surface-facing; the sequence is MSNETNCTLDFEQSVELFKE. A helical membrane pass occupies residues 21–41; it reads YNLFITAFLLFLTIILQYGYA. At 42 to 51 the chain is on the intravirion side; it reads TRSKFIYILK. A helical membrane pass occupies residues 52 to 72; sequence MIVLWCFWPLNIAVGVISCIY. Residues 73–77 lie on the Virion surface side of the membrane; that stretch reads PPNTG. A helical membrane pass occupies residues 78–98; the sequence is GLVAAIILTVFACLSFVGYWI. Topologically, residues 99-225 are intravirion; the sequence is QSIRLFKRCR…VATGGSSLYT (127 aa).

The protein belongs to the gammacoronaviruses M protein family. As to quaternary structure, homomultimer. Interacts with envelope E protein in the budding compartment of the host cell, which is located between endoplasmic reticulum and the Golgi complex. Forms a complex with HE and S proteins. Interacts with nucleocapsid N protein. This interaction probably participates in RNA packaging into the virus.

It is found in the virion membrane. It localises to the host Golgi apparatus membrane. Component of the viral envelope that plays a central role in virus morphogenesis and assembly via its interactions with other viral proteins. This chain is Membrane protein, found in Gallus gallus (Chicken).